Here is a 209-residue protein sequence, read N- to C-terminus: Thymidine kinase (209 aa).

ATP contacts are provided by residues 9-16 (AAMNAGKS) and 88-91 (DEAQ). Catalysis depends on Glu-89, which acts as the Proton acceptor. Positions 146, 148, 183, and 186 each coordinate Zn(2+).

Belongs to the thymidine kinase family. As to quaternary structure, homotetramer.

The protein resides in the cytoplasm. The enzyme catalyses thymidine + ATP = dTMP + ADP + H(+). The polypeptide is Thymidine kinase (Legionella pneumophila (strain Paris)).